The chain runs to 1407 residues: YEATS domain-containing protein 2 (1407 aa).

Residue Lys9 forms a Glycyl lysine isopeptide (Lys-Gly) (interchain with G-Cter in SUMO2) linkage. Positions 54–80 (MKNKEHEIDVIDQRLIEARRMMDKLRA) form a coiled coil. Residue Lys113 forms a Glycyl lysine isopeptide (Lys-Gly) (interchain with G-Cter in SUMO2) linkage. The disordered stretch occupies residues 116-196 (LESPSRSSSP…SHKRELRNAD (81 aa)). Residues Ser118, Ser120, and Ser157 each carry the phosphoserine modification. Residues 119–148 (PSRSSSPTNQRSETPSANHSESDSLSQHND) show a composition bias toward polar residues. The span at 149-165 (FLSDKDNNSNVDVEERP) shows a compositional bias: basic and acidic residues. Lys189 participates in a covalent cross-link: Glycyl lysine isopeptide (Lys-Gly) (interchain with G-Cter in SUMO2). Residues 201 to 346 (ETSRLFVKKT…EDSVYPQSSE (146 aa)) form the YEATS domain. Histone H3K27cr binding regions lie at residues 260-262 (HPS) and 283-285 (WGE). Phosphothreonine is present on Thr406. Phosphoserine occurs at positions 446, 462, 464, 470, and 472. The interval 462–540 (SGSPISTPSP…GTGSPIPKIH (79 aa)) is disordered. A Phosphothreonine modification is found at Thr477. A Glycyl lysine isopeptide (Lys-Gly) (interchain with G-Cter in SUMO2) cross-link involves residue Lys486. The span at 511 to 520 (STPSTGSPTS) shows a compositional bias: low complexity. Ser534 is subject to Phosphoserine. A Glycyl lysine isopeptide (Lys-Gly) (interchain with G-Cter in SUMO2) cross-link involves residue Lys550. Ser573 bears the Phosphoserine mark. Lys590 is covalently cross-linked (Glycyl lysine isopeptide (Lys-Gly) (interchain with G-Cter in SUMO2)). Ser625 is modified (phosphoserine). Glycyl lysine isopeptide (Lys-Gly) (interchain with G-Cter in SUMO2) cross-links involve residues Lys647 and Lys771. The segment at 791–833 (SGSAAAGGSGSSGAGGGSGGGGGSGAGGTPSTSGPGGGPQHLT) is disordered. The span at 795–829 (AAGGSGSSGAGGGSGGGGGSGAGGTPSTSGPGGGP) shows a compositional bias: gly residues. A Glycyl lysine isopeptide (Lys-Gly) (interchain with G-Cter in SUMO2) cross-link involves residue Lys908. Lys1095 is covalently cross-linked (Glycyl lysine isopeptide (Lys-Gly) (interchain with G-Cter in SUMO1); alternate). Lys1095 participates in a covalent cross-link: Glycyl lysine isopeptide (Lys-Gly) (interchain with G-Cter in SUMO2); alternate. A Glycyl lysine isopeptide (Lys-Gly) (interchain with G-Cter in SUMO2) cross-link involves residue Lys1115. Thr1204 is modified (phosphothreonine). Residues Lys1207 and Lys1270 each participate in a glycyl lysine isopeptide (Lys-Gly) (interchain with G-Cter in SUMO2) cross-link.

As to quaternary structure, component of the ADA2A-containing complex (ATAC), composed of KAT14, KAT2A, TADA2L, TADA3L, ZZ3, MBIP, WDR5, YEATS2, SGF29 and DR1.

It localises to the nucleus. Chromatin reader component of the ATAC complex, a complex with histone acetyltransferase activity on histones H3 and H4. YEATS2 specifically recognizes and binds histone H3 crotonylated at 'Lys-27' (H3K27cr). Crotonylation marks active promoters and enhancers and confers resistance to transcriptional repressors. In Mus musculus (Mouse), this protein is YEATS domain-containing protein 2.